We begin with the raw amino-acid sequence, 56 residues long: uncharacterized protein (56 aa).

This is an uncharacterized protein from Dictyostelium discoideum (Social amoeba).